We begin with the raw amino-acid sequence, 134 residues long: NADH-quinone oxidoreductase subunit A 1 (134 aa).

Transmembrane regions (helical) follow at residues Leu10–Ala30, Phe65–Trp85, and Ile94–Leu114.

This sequence belongs to the complex I subunit 3 family. In terms of assembly, NDH-1 is composed of 14 different subunits. Subunits NuoA, H, J, K, L, M, N constitute the membrane sector of the complex.

Its subcellular location is the cell inner membrane. It catalyses the reaction a quinone + NADH + 5 H(+)(in) = a quinol + NAD(+) + 4 H(+)(out). In terms of biological role, NDH-1 shuttles electrons from NADH, via FMN and iron-sulfur (Fe-S) centers, to quinones in the respiratory chain. The immediate electron acceptor for the enzyme in this species is believed to be ubiquinone. Couples the redox reaction to proton translocation (for every two electrons transferred, four hydrogen ions are translocated across the cytoplasmic membrane), and thus conserves the redox energy in a proton gradient. The polypeptide is NADH-quinone oxidoreductase subunit A 1 (Citrifermentans bemidjiense (strain ATCC BAA-1014 / DSM 16622 / JCM 12645 / Bem) (Geobacter bemidjiensis)).